The chain runs to 397 residues: Teichoic acid D-alanine hydrolase (397 aa).

Residues 1-27 (MKFNKEKLVIHACVLLFIIISIGLVFH) form the signal peptide.

It localises to the cell membrane. It catalyses the reaction [(4-D-Ala)-(2-GlcNAc)-Rib-ol-P]n-[Gro-P]m-beta-D-ManNAc-(1-&gt;4)-alpha-D-GlcNAc-P-peptidoglycan + n H2O = [(2-GlcNAc)-Rib-ol-P]n-[Gro-P]m-beta-D-ManNAc-(1-&gt;4)-alpha-D-GlcNAc-P-peptidoglycan + n D-alanine.. Catalyzes the liberation of D-alanyl moieties present on wall teichoic acid (WTA) and lipoteichoic acid (LTA). Affects the methicillin resistance level and autolysis in the presence of Triton X-100 as well as the cell wall structure. The protein is Teichoic acid D-alanine hydrolase (fmtA) of Staphylococcus aureus (strain MRSA252).